Here is a 120-residue protein sequence, read N- to C-terminus: Small ribosomal subunit protein bS16 (120 aa).

Residues 80-120 (GLKKRPARNNPHKGEPGKKAQERIAAAKQAAEDAKAAEASA) are disordered. Basic residues predominate over residues 81–90 (LKKRPARNNP). Basic and acidic residues-rich tracts occupy residues 91–101 (HKGEPGKKAQE) and 109–120 (AAEDAKAAEASA).

Belongs to the bacterial ribosomal protein bS16 family.

The protein is Small ribosomal subunit protein bS16 of Bartonella bacilliformis (strain ATCC 35685 / KC583 / Herrer 020/F12,63).